A 155-amino-acid polypeptide reads, in one-letter code: SsrA-binding protein (155 aa).

Residues Asp132–Arg155 form a disordered region.

It belongs to the SmpB family.

It is found in the cytoplasm. Its function is as follows. Required for rescue of stalled ribosomes mediated by trans-translation. Binds to transfer-messenger RNA (tmRNA), required for stable association of tmRNA with ribosomes. tmRNA and SmpB together mimic tRNA shape, replacing the anticodon stem-loop with SmpB. tmRNA is encoded by the ssrA gene; the 2 termini fold to resemble tRNA(Ala) and it encodes a 'tag peptide', a short internal open reading frame. During trans-translation Ala-aminoacylated tmRNA acts like a tRNA, entering the A-site of stalled ribosomes, displacing the stalled mRNA. The ribosome then switches to translate the ORF on the tmRNA; the nascent peptide is terminated with the 'tag peptide' encoded by the tmRNA and targeted for degradation. The ribosome is freed to recommence translation, which seems to be the essential function of trans-translation. In Oceanobacillus iheyensis (strain DSM 14371 / CIP 107618 / JCM 11309 / KCTC 3954 / HTE831), this protein is SsrA-binding protein.